We begin with the raw amino-acid sequence, 284 residues long: NAD kinase (284 aa).

The Proton acceptor role is filled by aspartate 67. Residues 67–68 (DG), 141–142 (ND), arginine 152, lysine 169, aspartate 171, 182–187 (TGYSLS), and glutamine 241 contribute to the NAD(+) site.

Belongs to the NAD kinase family. A divalent metal cation is required as a cofactor.

It localises to the cytoplasm. It carries out the reaction NAD(+) + ATP = ADP + NADP(+) + H(+). Its function is as follows. Involved in the regulation of the intracellular balance of NAD and NADP, and is a key enzyme in the biosynthesis of NADP. Catalyzes specifically the phosphorylation on 2'-hydroxyl of the adenosine moiety of NAD to yield NADP. The polypeptide is NAD kinase (Geobacter sulfurreducens (strain ATCC 51573 / DSM 12127 / PCA)).